The following is a 363-amino-acid chain: Alanine racemase (363 aa).

Lys35 serves as the catalytic Proton acceptor; specific for D-alanine. Lys35 is subject to N6-(pyridoxal phosphate)lysine. Residue Arg134 coordinates substrate. The active-site Proton acceptor; specific for L-alanine is Tyr259. Met307 is a substrate binding site.

This sequence belongs to the alanine racemase family. Requires pyridoxal 5'-phosphate as cofactor.

The catalysed reaction is L-alanine = D-alanine. It participates in amino-acid biosynthesis; D-alanine biosynthesis; D-alanine from L-alanine: step 1/1. Functionally, catalyzes the interconversion of L-alanine and D-alanine. May also act on other amino acids. The sequence is that of Alanine racemase (alr) from Shewanella denitrificans (strain OS217 / ATCC BAA-1090 / DSM 15013).